A 439-amino-acid chain; its full sequence is uncharacterized protein (439 aa).

Residue Gly28–Thr35 participates in ATP binding.

This is an uncharacterized protein from Methanocaldococcus jannaschii (strain ATCC 43067 / DSM 2661 / JAL-1 / JCM 10045 / NBRC 100440) (Methanococcus jannaschii).